The chain runs to 482 residues: Programmed cell death protein 7 (482 aa).

Disordered regions lie at residues 1–136 (MALP…GDAA) and 151–170 (GNPR…GPSL). Residues 13–48 (GPPPPQPPPSAPFGCPPPPLPSPAFPPPLPQRPGPF) show a composition bias toward pro residues. The span at 49–71 (PGASAPFLQPPLALQPRAPAEAS) shows a compositional bias: low complexity. Composition is skewed to pro residues over residues 82–100 (PVPP…PFPG) and 109–130 (PPPP…PPPD). A compositionally biased stretch (low complexity) spans 151–168 (GNPRRPGGLRTPRTPAGP). Residues 233–408 (EARRRLERVR…LQKREIESKL (176 aa)) are a coiled coil.

Interacts with RBM40. Component of the U11/U12 snRNPs that are part of the U12-type spliceosome. As to expression, highly expressed in testis, thymus and lymph nodes. Detected at low levels in embryonic stem cells.

It localises to the nucleus. Functionally, promotes apoptosis when overexpressed. In Mus musculus (Mouse), this protein is Programmed cell death protein 7 (Pdcd7).